The chain runs to 310 residues: 4-hydroxy-3-methylbut-2-enyl diphosphate reductase (310 aa).

Residue Cys-13 participates in [4Fe-4S] cluster binding. Positions 42 and 75 each coordinate (2E)-4-hydroxy-3-methylbut-2-enyl diphosphate. His-42 and His-75 together coordinate dimethylallyl diphosphate. Positions 42 and 75 each coordinate isopentenyl diphosphate. A [4Fe-4S] cluster-binding site is contributed by Cys-97. His-125 serves as a coordination point for (2E)-4-hydroxy-3-methylbut-2-enyl diphosphate. His-125 is a dimethylallyl diphosphate binding site. His-125 is an isopentenyl diphosphate binding site. The active-site Proton donor is the Glu-127. Thr-165 is a binding site for (2E)-4-hydroxy-3-methylbut-2-enyl diphosphate. Cys-195 serves as a coordination point for [4Fe-4S] cluster. Positions 223, 224, 225, and 267 each coordinate (2E)-4-hydroxy-3-methylbut-2-enyl diphosphate. 4 residues coordinate dimethylallyl diphosphate: Ser-223, Ser-224, Asn-225, and Ser-267. Residues Ser-223, Ser-224, Asn-225, and Ser-267 each coordinate isopentenyl diphosphate.

The protein belongs to the IspH family. [4Fe-4S] cluster serves as cofactor.

The enzyme catalyses isopentenyl diphosphate + 2 oxidized [2Fe-2S]-[ferredoxin] + H2O = (2E)-4-hydroxy-3-methylbut-2-enyl diphosphate + 2 reduced [2Fe-2S]-[ferredoxin] + 2 H(+). The catalysed reaction is dimethylallyl diphosphate + 2 oxidized [2Fe-2S]-[ferredoxin] + H2O = (2E)-4-hydroxy-3-methylbut-2-enyl diphosphate + 2 reduced [2Fe-2S]-[ferredoxin] + 2 H(+). It functions in the pathway isoprenoid biosynthesis; dimethylallyl diphosphate biosynthesis; dimethylallyl diphosphate from (2E)-4-hydroxy-3-methylbutenyl diphosphate: step 1/1. The protein operates within isoprenoid biosynthesis; isopentenyl diphosphate biosynthesis via DXP pathway; isopentenyl diphosphate from 1-deoxy-D-xylulose 5-phosphate: step 6/6. Catalyzes the conversion of 1-hydroxy-2-methyl-2-(E)-butenyl 4-diphosphate (HMBPP) into a mixture of isopentenyl diphosphate (IPP) and dimethylallyl diphosphate (DMAPP). Acts in the terminal step of the DOXP/MEP pathway for isoprenoid precursor biosynthesis. The protein is 4-hydroxy-3-methylbut-2-enyl diphosphate reductase of Chlamydia pneumoniae (Chlamydophila pneumoniae).